A 731-amino-acid chain; its full sequence is Alpha-1,4-glucan:maltose-1-phosphate maltosyltransferase (731 aa).

Basic and acidic residues predominate over residues 1-10; that stretch reads MEAQHNETEA. Positions 1-31 are disordered; sequence MEAQHNETEAAGKPAAKKTTRTRKPRASKQA. Residues 15–27 show a composition bias toward basic residues; it reads AAKKTTRTRKPRA. Alpha-maltose 1-phosphate is bound by residues K321, Q381, and D416. The active-site Nucleophile is D451. N452 lines the alpha-maltose 1-phosphate pocket. Residue E480 is the Proton donor of the active site. Position 590–591 (590–591) interacts with alpha-maltose 1-phosphate; it reads KF.

Belongs to the glycosyl hydrolase 13 family. GlgE subfamily. Homodimer.

It carries out the reaction alpha-maltose 1-phosphate + [(1-&gt;4)-alpha-D-glucosyl](n) = [(1-&gt;4)-alpha-D-glucosyl](n+2) + phosphate. Functionally, maltosyltransferase that uses maltose 1-phosphate (M1P) as the sugar donor to elongate linear or branched alpha-(1-&gt;4)-glucans. Is involved in a branched alpha-glucan biosynthetic pathway from trehalose, together with TreS, Mak and GlgB. The sequence is that of Alpha-1,4-glucan:maltose-1-phosphate maltosyltransferase from Bifidobacterium animalis subsp. lactis (strain Bl-04 / DGCC2908 / RB 4825 / SD5219).